A 1151-amino-acid polypeptide reads, in one-letter code: Importin beta (1151 aa).

HEAT repeat units lie at residues methionine 1–glutamate 36, proline 37–asparagine 82, proline 83–phenylalanine 132, proline 133–glycine 175, glycine 176–isoleucine 222, proline 223–lysine 269, proline 270–lysine 316, alanine 317–phenylalanine 377, proline 378–lysine 416, glutamate 417–alanine 453, proline 454–lysine 495, alanine 496–aspartate 540, phenylalanine 541–leucine 593, proline 594–phenylalanine 642, proline 643–threonine 704, proline 705–serine 756, proline 757–glutamate 811, threonine 812–aspartate 880, leucine 881–serine 932, proline 933–aspartate 978, proline 979–phenylalanine 1027, proline 1028–aspartate 1074, proline 1075–glutamine 1120, and isoleucine 1121–glutamine 1151.

The protein belongs to the importin beta family.

The protein resides in the nucleus intermembrane space. It localises to the cytoplasm. It is found in the nucleus. Functions in nuclear protein import as nuclear transport receptor. Involved in encystation process. Constitutive expression enhances cyst production and increases transcription of endogenous genes involved in encystation. Level of mRNA of the transcriptional factor myb1-like protein increases in early stages of the encystation process followed by increased mRNAs of the cyst wall proteins cwp1-3. The sequence is that of Importin beta from Giardia intestinalis (strain ATCC 50803 / WB clone C6) (Giardia lamblia).